A 130-amino-acid chain; its full sequence is Small ribosomal subunit protein uS8 (130 aa).

The protein belongs to the universal ribosomal protein uS8 family. In terms of assembly, part of the 30S ribosomal subunit. Contacts proteins S5 and S12.

Its function is as follows. One of the primary rRNA binding proteins, it binds directly to 16S rRNA central domain where it helps coordinate assembly of the platform of the 30S subunit. This chain is Small ribosomal subunit protein uS8, found in Pasteurella multocida (strain Pm70).